A 514-amino-acid chain; its full sequence is Cardiolipin synthase 2 (514 aa).

3 consecutive transmembrane segments (helical) span residues 7–27 (LIFFILLLFALFVSLRMFIDV), 41–61 (ILGIISILFTVSAFLIGCVIF), and 71–91 (LTWLIVLGIFPVFGFFAYLLF). PLD phosphodiesterase domains lie at 249–276 (INYRNHRKIVVIDGNEGFVGGLNIGDEY) and 427–454 (EKGFLHSKIVIVDSDLASIGTANMDMRS). Active-site residues include His-254, Lys-256, Asp-261, His-432, Lys-434, and Asp-439.

This sequence belongs to the phospholipase D family. Cardiolipin synthase subfamily.

It localises to the cell membrane. It carries out the reaction 2 a 1,2-diacyl-sn-glycero-3-phospho-(1'-sn-glycerol) = a cardiolipin + glycerol. Its function is as follows. Catalyzes the reversible phosphatidyl group transfer from one phosphatidylglycerol molecule to another to form cardiolipin (CL) (diphosphatidylglycerol) and glycerol. This chain is Cardiolipin synthase 2 (cls2), found in Bacillus cereus (strain ATCC 14579 / DSM 31 / CCUG 7414 / JCM 2152 / NBRC 15305 / NCIMB 9373 / NCTC 2599 / NRRL B-3711).